The sequence spans 288 residues: 4-diphosphocytidyl-2-C-methyl-D-erythritol kinase (288 aa).

The active site involves lysine 10. Residue 94-104 (PVAAGLGGGSS) participates in ATP binding. Residue aspartate 136 is part of the active site.

Belongs to the GHMP kinase family. IspE subfamily.

It carries out the reaction 4-CDP-2-C-methyl-D-erythritol + ATP = 4-CDP-2-C-methyl-D-erythritol 2-phosphate + ADP + H(+). It participates in isoprenoid biosynthesis; isopentenyl diphosphate biosynthesis via DXP pathway; isopentenyl diphosphate from 1-deoxy-D-xylulose 5-phosphate: step 3/6. In terms of biological role, catalyzes the phosphorylation of the position 2 hydroxy group of 4-diphosphocytidyl-2C-methyl-D-erythritol. In Lactiplantibacillus plantarum (strain ATCC BAA-793 / NCIMB 8826 / WCFS1) (Lactobacillus plantarum), this protein is 4-diphosphocytidyl-2-C-methyl-D-erythritol kinase.